We begin with the raw amino-acid sequence, 206 residues long: Lipid A acyltransferase PagP (206 aa).

The N-terminal stretch at 1 to 22 is a signal peptide; sequence MKQMVCWLTAGLLTLGGLPARA. A compositionally biased stretch (low complexity) spans 26-46; it reads VPAVPETPAAPAAPAVQETPA. Positions 26 to 50 are disordered; it reads VPAVPETPAAPAAPAVQETPASSAA. Catalysis depends on residues histidine 80, aspartate 123, and serine 124.

This sequence belongs to the lipid A palmitoyltransferase family. In terms of assembly, homodimer.

The protein localises to the cell outer membrane. It carries out the reaction a lipid A + a 1,2-diacyl-sn-glycero-3-phosphocholine = a hepta-acyl lipid A + a 2-acyl-sn-glycero-3-phosphocholine. The catalysed reaction is a lipid IVA + a 1,2-diacyl-sn-glycero-3-phosphocholine = a lipid IVB + a 2-acyl-sn-glycero-3-phosphocholine. The enzyme catalyses a lipid IIA + a 1,2-diacyl-sn-glycero-3-phosphocholine = a lipid IIB + a 2-acyl-sn-glycero-3-phosphocholine. Transfers a fatty acid residue from the sn-1 position of a phospholipid to the N-linked hydroxyfatty acid chain on the proximal unit of lipid A or its precursors. In Laribacter hongkongensis (strain HLHK9), this protein is Lipid A acyltransferase PagP.